The sequence spans 216 residues: Probable nicotinate-nucleotide adenylyltransferase (216 aa).

This sequence belongs to the NadD family.

It carries out the reaction nicotinate beta-D-ribonucleotide + ATP + H(+) = deamido-NAD(+) + diphosphate. It participates in cofactor biosynthesis; NAD(+) biosynthesis; deamido-NAD(+) from nicotinate D-ribonucleotide: step 1/1. In terms of biological role, catalyzes the reversible adenylation of nicotinate mononucleotide (NaMN) to nicotinic acid adenine dinucleotide (NaAD). This Pelobacter propionicus (strain DSM 2379 / NBRC 103807 / OttBd1) protein is Probable nicotinate-nucleotide adenylyltransferase.